The following is a 208-amino-acid chain: Floral homeotic protein PISTILLATA (208 aa).

An MADS-box domain is found at 3-57 (RGKIEIKRIENANNRVVTFSKRRNGLVKKAKEITVLCDAKVALIIFASNGKMIDY). Residues 75 to 117 (SGKKLWDAKHENLSNEIDRIKKENDSLQLELRHLKGEDIQSLN) are a coiled coil. Residues 84–170 (HENLSNEIDR…TFQLQQQEMA (87 aa)) enclose the K-box domain.

Forms a heterodimer with APETALA3, capable of binding to CArG-box sequences. AP3/PI heterodimer binds AP1 or SEP3 to form a ternary complex.

Its subcellular location is the nucleus. Its function is as follows. Probable transcription factor involved in the genetic control of flower development. Is required for normal development of petals and stamens in the wild-type flower. Forms a heterodimer with APETALA3 that is required for autoregulation of both AP3 and PI genes. AP3/PI heterodimer interacts with APETALA1 or SEPALLATA3 to form a ternary complex that could be responsible for the regulation of the genes involved in the flower development. AP3/PI heterodimer activates the expression of NAP. AP3/PI prevents GATA22/GNL and GATA21/GNC expression. The sequence is that of Floral homeotic protein PISTILLATA (PI) from Arabidopsis thaliana (Mouse-ear cress).